We begin with the raw amino-acid sequence, 420 residues long: Nucleobindin-2 (420 aa).

Positions 1–24 (MRWRIIQVQYCFLLVPCMLTALEA) are cleaved as a signal peptide. Residues 171–223 (RTRHEEFKKYEMMKEHERREYLKTLSEEKRKEEESKFEEMKRKHEDHPKVNHP) mediate DNA binding. The tract at residues 193-225 (KTLSEEKRKEEESKFEEMKRKHEDHPKVNHPGS) is disordered. The binds to necdin stretch occupies residues 213–420 (KHEDHPKVNH…AGELKFEPHT (208 aa)). EF-hand domains lie at 241-276 (PNDF…ELEK) and 293-328 (ERLR…KEFL). Residues D254, N256, D258, E265, D306, N308, D310, and E317 each coordinate Ca(2+). A GBA motif is present at residues 304–334 (EIDNNKDRLVTLEEFLRATEKKEFLEPDSWE). S332 is modified (phosphoserine). Basic and acidic residues predominate over residues 365-389 (AEELQKQKEDLQRQHDHLEAQKQEY). The interval 365–420 (AEELQKQKEDLQRQHDHLEAQKQEYHQAVQHLEQKKLQQGIAPSGPAGELKFEPHT) is disordered.

Belongs to the nucleobindin family. Interacts (via GBA motif) with guanine nucleotide-binding protein G(i) alpha subunit GNAI3. Preferentially interacts with inactive rather than active GNAI3. Interaction with GNAI3 is inhibited when NUCB2 binds calcium, probably due to a conformational change which renders the GBA motif inaccessible. Binds to the postmitotic growth suppressor NDN; coexpression abolishes NUCB2 secretion. Interacts with MC4R. In terms of tissue distribution, found in liver, heart, thymus, muscle, intestine, kidney, lung, spleen and throughout the brain, in cerebral cortex, hippocampus, hypothalamus and medulla oblongata. Nucb2 and necdin levels were higher in postmitotic neurons.

The protein resides in the cytoplasm. It localises to the perikaryon. Its subcellular location is the endoplasmic reticulum. The protein localises to the golgi apparatus. It is found in the nucleus envelope. The protein resides in the membrane. It localises to the secreted. Functionally, calcium-binding protein which may have a role in calcium homeostasis. Acts as a non-receptor guanine nucleotide exchange factor which binds to and activates guanine nucleotide-binding protein (G-protein) alpha subunit GNAI3. Anorexigenic peptide, seems to play an important role in hypothalamic pathways regulating food intake and energy homeostasis, acting in a leptin-independent manner. May also exert hypertensive roles and modulate blood pressure through directly acting on peripheral arterial resistance. In intestinal epithelial cells, plays a role in the inhibition of hepatic glucose production via MC4R receptor leading to increased cyclic adenosine monophosphate (cAMP) levels and glucagon-like peptide 1 (GLP-1) secretion. In Mus musculus (Mouse), this protein is Nucleobindin-2 (Nucb2).